A 441-amino-acid chain; its full sequence is Probable membrane metalloprotease ARASP2, chloroplastic (441 aa).

The N-terminal 84 residues, 1 to 84 (MLLNISSSPI…DFGSLESVLE (84 aa)), are a transit peptide targeting the chloroplast. A Zn(2+)-binding site is contributed by H96. E97 is a catalytic residue. H100 lines the Zn(2+) pocket. Residues 171-191 (VIVVSAGIVANVIFAYAIIFT) traverse the membrane as a helical segment. Positions 196 to 249 (VGLPVQESFPGVLVPDVKSFSAASRDGLLPGDVILAVDGTELSNSGSDSVSKVV) constitute a PDZ domain. Transmembrane regions (helical) follow at residues 373–393 (LAVI…ALIL) and 407–427 (VEQG…LFLI).

It belongs to the peptidase M50A family. The cofactor is Zn(2+).

The protein resides in the plastid. It localises to the chloroplast inner membrane. Functionally, metalloprotease essential for chloroplast and plant development. May be involved in regulated intramembrane proteolysis (RIP). This Arabidopsis thaliana (Mouse-ear cress) protein is Probable membrane metalloprotease ARASP2, chloroplastic.